A 308-amino-acid chain; its full sequence is Mycothiol acetyltransferase (308 aa).

Positions 1–20 (MTSDDTAQPSGARRIETRPD) are disordered. N-acetyltransferase domains are found at residues 15-152 (IETR…RSLT) and 165-308 (VTVR…RSET). Residue glutamate 47 coordinates 1D-myo-inositol 2-(L-cysteinylamino)-2-deoxy-alpha-D-glucopyranoside. Position 91 to 93 (91 to 93 (LVV)) interacts with acetyl-CoA. The 1D-myo-inositol 2-(L-cysteinylamino)-2-deoxy-alpha-D-glucopyranoside site is built by glutamate 192, lysine 231, and glutamate 240. Acetyl-CoA is bound by residues 244–246 (VGV) and 251–257 (QGGGLGK). Tyrosine 278 serves as a coordination point for 1D-myo-inositol 2-(L-cysteinylamino)-2-deoxy-alpha-D-glucopyranoside.

This sequence belongs to the acetyltransferase family. MshD subfamily. As to quaternary structure, monomer.

The enzyme catalyses 1D-myo-inositol 2-(L-cysteinylamino)-2-deoxy-alpha-D-glucopyranoside + acetyl-CoA = mycothiol + CoA + H(+). In terms of biological role, catalyzes the transfer of acetyl from acetyl-CoA to desacetylmycothiol (Cys-GlcN-Ins) to form mycothiol. This is Mycothiol acetyltransferase from Streptomyces scabiei (strain 87.22).